The following is a 400-amino-acid chain: Ribosomal RNA large subunit methyltransferase I (400 aa).

The PUA domain occupies 6–84 (FPRLVLAKGR…NEAIDSAFFE (79 aa)).

The protein belongs to the methyltransferase superfamily. RlmI family.

It is found in the cytoplasm. The catalysed reaction is cytidine(1962) in 23S rRNA + S-adenosyl-L-methionine = 5-methylcytidine(1962) in 23S rRNA + S-adenosyl-L-homocysteine + H(+). Specifically methylates the cytosine at position 1962 (m5C1962) of 23S rRNA. The sequence is that of Ribosomal RNA large subunit methyltransferase I from Klebsiella pneumoniae subsp. pneumoniae (strain ATCC 700721 / MGH 78578).